Reading from the N-terminus, the 229-residue chain is Dephospho-CoA kinase (229 aa).

The DPCK domain occupies Thr-3–Lys-203. Gly-11 to Ala-16 lines the ATP pocket. Positions Lys-203–Gly-229 are disordered.

This sequence belongs to the CoaE family.

Its subcellular location is the cytoplasm. The enzyme catalyses 3'-dephospho-CoA + ATP = ADP + CoA + H(+). It functions in the pathway cofactor biosynthesis; coenzyme A biosynthesis; CoA from (R)-pantothenate: step 5/5. In terms of biological role, catalyzes the phosphorylation of the 3'-hydroxyl group of dephosphocoenzyme A to form coenzyme A. This Frankia casuarinae (strain DSM 45818 / CECT 9043 / HFP020203 / CcI3) protein is Dephospho-CoA kinase.